We begin with the raw amino-acid sequence, 326 residues long: Acetyl-coenzyme A carboxylase carboxyl transferase subunit alpha (326 aa).

Residues 45–298 (LEARAMQLRE…KQVLLENLDE (254 aa)) form the CoA carboxyltransferase C-terminal domain.

Belongs to the AccA family. As to quaternary structure, acetyl-CoA carboxylase is a heterohexamer composed of biotin carboxyl carrier protein (AccB), biotin carboxylase (AccC) and two subunits each of ACCase subunit alpha (AccA) and ACCase subunit beta (AccD).

It localises to the cytoplasm. It catalyses the reaction N(6)-carboxybiotinyl-L-lysyl-[protein] + acetyl-CoA = N(6)-biotinyl-L-lysyl-[protein] + malonyl-CoA. It participates in lipid metabolism; malonyl-CoA biosynthesis; malonyl-CoA from acetyl-CoA: step 1/1. Functionally, component of the acetyl coenzyme A carboxylase (ACC) complex. First, biotin carboxylase catalyzes the carboxylation of biotin on its carrier protein (BCCP) and then the CO(2) group is transferred by the carboxyltransferase to acetyl-CoA to form malonyl-CoA. The protein is Acetyl-coenzyme A carboxylase carboxyl transferase subunit alpha of Nostoc punctiforme (strain ATCC 29133 / PCC 73102).